Reading from the N-terminus, the 775-residue chain is Serine/threonine-protein kinase-like protein CCR1 (775 aa).

The N-terminal stretch at 1–23 (METRCSLLFLSLILLYLPKPGSG) is a signal peptide. The Extracellular segment spans residues 24 to 439 (FGSSGPIAAS…DKHWHQLQRL (416 aa)). N-linked (GlcNAc...) asparagine glycans are attached at residues Asn-57, Asn-102, Asn-167, Asn-213, Asn-220, Asn-241, Asn-261, Asn-292, Asn-328, and Asn-360. A TNFR-Cys repeat occupies 351 to 406 (PCNEKEFAFNASILNEPDLTSLCVRKELMVCSPCGSDCSHGFFLSSSCTANSDRIC). 3 cysteine pairs are disulfide-bonded: Cys-352/Cys-381, Cys-384/Cys-398, and Cys-388/Cys-406. N-linked (GlcNAc...) asparagine glycosylation is present at Asn-414. Residues 440-460 (VLIIGSCASALLIIIIGCCVV) form a helical membrane-spanning segment. Residues 461-775 (PRIVTSPNKE…EHVARDALIF (315 aa)) lie on the Cytoplasmic side of the membrane. A Protein kinase domain is found at 520-770 (FKEFNELGRG…LANWLEHVAR (251 aa)). ATP contacts are provided by residues 526–534 (LGRGSYGFV) and Lys-548. Asp-645 functions as the Proton acceptor in the catalytic mechanism.

This sequence belongs to the protein kinase superfamily. Ser/Thr protein kinase family. Homodimer. As to expression, expressed in roots, leaves, shoot apical meristems (SAM), and floral buds.

It localises to the membrane. It carries out the reaction L-seryl-[protein] + ATP = O-phospho-L-seryl-[protein] + ADP + H(+). It catalyses the reaction L-threonyl-[protein] + ATP = O-phospho-L-threonyl-[protein] + ADP + H(+). Serine/threonine-protein kinase with low activity. In Arabidopsis thaliana (Mouse-ear cress), this protein is Serine/threonine-protein kinase-like protein CCR1 (CCR1).